Reading from the N-terminus, the 272-residue chain is Shikimate dehydrogenase (NADP(+)) (272 aa).

Shikimate contacts are provided by residues Ser16–Ser18 and Thr63. Catalysis depends on Lys67, which acts as the Proton acceptor. Residue Glu79 participates in NADP(+) binding. Residues Asn88 and Asp103 each contribute to the shikimate site. NADP(+) contacts are provided by residues Gly127–Ala131, Asn151–Arg156, and Ile212. Tyr214 lines the shikimate pocket. An NADP(+)-binding site is contributed by Gly235.

It belongs to the shikimate dehydrogenase family. In terms of assembly, homodimer.

The catalysed reaction is shikimate + NADP(+) = 3-dehydroshikimate + NADPH + H(+). It functions in the pathway metabolic intermediate biosynthesis; chorismate biosynthesis; chorismate from D-erythrose 4-phosphate and phosphoenolpyruvate: step 4/7. Functionally, involved in the biosynthesis of the chorismate, which leads to the biosynthesis of aromatic amino acids. Catalyzes the reversible NADPH linked reduction of 3-dehydroshikimate (DHSA) to yield shikimate (SA). This Staphylococcus epidermidis (strain ATCC 12228 / FDA PCI 1200) protein is Shikimate dehydrogenase (NADP(+)).